Consider the following 277-residue polypeptide: Large ribosomal subunit protein uL2 (277 aa).

Residues 219–277 (TVRGSVMNPNDHPHGGGEGKAPVGRKAPSTPWGKPALGLKTRNKKAKSNKLIVRRRNEK) are disordered. Residues 259 to 277 (TRNKKAKSNKLIVRRRNEK) show a composition bias toward basic residues.

It belongs to the universal ribosomal protein uL2 family. In terms of assembly, part of the 50S ribosomal subunit. Forms a bridge to the 30S subunit in the 70S ribosome.

Its function is as follows. One of the primary rRNA binding proteins. Required for association of the 30S and 50S subunits to form the 70S ribosome, for tRNA binding and peptide bond formation. It has been suggested to have peptidyltransferase activity; this is somewhat controversial. Makes several contacts with the 16S rRNA in the 70S ribosome. In Streptococcus equi subsp. zooepidemicus (strain MGCS10565), this protein is Large ribosomal subunit protein uL2.